Here is a 61-residue protein sequence, read N- to C-terminus: Small ribosomal subunit protein uS14 (61 aa).

Residues Cys-24, Cys-27, Cys-40, and Cys-43 each coordinate Zn(2+).

The protein belongs to the universal ribosomal protein uS14 family. Zinc-binding uS14 subfamily. In terms of assembly, part of the 30S ribosomal subunit. Contacts proteins S3 and S10. The cofactor is Zn(2+).

Its function is as follows. Binds 16S rRNA, required for the assembly of 30S particles and may also be responsible for determining the conformation of the 16S rRNA at the A site. This Staphylococcus carnosus (strain TM300) protein is Small ribosomal subunit protein uS14.